Here is a 960-residue protein sequence, read N- to C-terminus: Endoplasmic reticulum aminopeptidase 2 (960 aa).

Over 1–20 (MFHSSAMVNSHRKPMFNIHR) the chain is Cytoplasmic. A helical; Signal-anchor for type II membrane protein transmembrane segment spans residues 21–40 (GFYCLTAILPQICICSQFSV). The Lumenal segment spans residues 41 to 960 (PSSYHFTEDP…TLRTWLMVNT (920 aa)). Residues asparagine 85 and asparagine 119 are each glycosylated (N-linked (GlcNAc...) asparagine). A substrate-binding site is contributed by glutamate 200. Asparagine 219 carries an N-linked (GlcNAc...) asparagine glycan. Residue 334 to 338 (GAMEN) participates in substrate binding. A Zn(2+)-binding site is contributed by histidine 370. Residue glutamate 371 is the Proton acceptor of the active site. 2 residues coordinate Zn(2+): histidine 374 and glutamate 393. The N-linked (GlcNAc...) asparagine glycan is linked to asparagine 405. A disulfide bridge connects residues cysteine 421 and cysteine 460. Residue asparagine 650 is glycosylated (N-linked (GlcNAc...) asparagine). Cysteine 759 and cysteine 766 form a disulfide bridge.

Belongs to the peptidase M1 family. In terms of assembly, heterodimer with ERAP1. It depends on Zn(2+) as a cofactor. Post-translationally, N-glycosylated. Ubiquitously expressed. Highly expressed in spleen and leukocytes.

Its subcellular location is the endoplasmic reticulum membrane. In terms of biological role, aminopeptidase that plays a central role in peptide trimming, a step required for the generation of most HLA class I-binding peptides. Peptide trimming is essential to customize longer precursor peptides to fit them to the correct length required for presentation on MHC class I molecules. Preferentially hydrolyzes the basic residues Arg and Lys. The protein is Endoplasmic reticulum aminopeptidase 2 (ERAP2) of Homo sapiens (Human).